The chain runs to 791 residues: Phenylalanine--tRNA ligase beta subunit (791 aa).

Positions 39-149 (GDEIQNVVTG…SDTAIGKDIK (111 aa)) constitute a tRNA-binding domain. One can recognise a B5 domain in the interval 403-478 (IKERNLKVDS…RIYGYNNIPT (76 aa)). Asp456, Asp462, Glu465, and Glu466 together coordinate Mg(2+). Residues 698 to 791 (PKFPAVDRDM…LENNLGAELR (94 aa)) enclose the FDX-ACB domain.

Belongs to the phenylalanyl-tRNA synthetase beta subunit family. Type 1 subfamily. Tetramer of two alpha and two beta subunits. Requires Mg(2+) as cofactor.

Its subcellular location is the cytoplasm. The catalysed reaction is tRNA(Phe) + L-phenylalanine + ATP = L-phenylalanyl-tRNA(Phe) + AMP + diphosphate + H(+). The sequence is that of Phenylalanine--tRNA ligase beta subunit from Clostridium tetani (strain Massachusetts / E88).